The primary structure comprises 257 residues: MGKTIVIKCGGSVLSDLSPSFFTSLQEMYAQGMNIVLVHGGGPEIGQMLKRLNVPSEFVNGLRKTTKEVLEVAEMVLAGKVNKQLVALLRQHGLPAVGVSGVDACLLQAAPIDLAKLGYVGEVVNVNADFVHQLLKSRYIPIISPIGADKDGQKYNINADTAAGAVAKAIKAAQLLFVTDVPGILRNGSIVEQATIDVIERMMNEGIITGGMIPKVKAAIAALSESLHEVMIVSGKTPFYENGQLHGTTIRNEVGVY.

Substrate is bound by residues 41-42, Arg-63, and Asn-156; that span reads GG.

Belongs to the acetylglutamate kinase family. ArgB subfamily.

Its subcellular location is the cytoplasm. The enzyme catalyses N-acetyl-L-glutamate + ATP = N-acetyl-L-glutamyl 5-phosphate + ADP. The protein operates within amino-acid biosynthesis; L-arginine biosynthesis; N(2)-acetyl-L-ornithine from L-glutamate: step 2/4. In terms of biological role, catalyzes the ATP-dependent phosphorylation of N-acetyl-L-glutamate. This chain is Acetylglutamate kinase, found in Geobacillus sp. (strain WCH70).